Here is a 221-residue protein sequence, read N- to C-terminus: MDGFEIASELLQASHHLPVLGTGSPSGSDIISGNYMLGYSADDANLSQFEQLEGLLGSPTVANHVDFGKETADLAFLDDSGGILSSVELAGMVSPPLDAVVPMPGITRASRSRPAFSTPASRPGLSSAKSPSLGATSPGSMDRSEEVKQLRKKYHEKYKERNRLAAGRSRQKQADLINLLQAEQQEEERRRKALELEIANMQKELVDMKQELQHHIRISNC.

The segment at 109-146 (ASRSRPAFSTPASRPGLSSAKSPSLGATSPGSMDRSEE) is disordered. Over residues 127–139 (SAKSPSLGATSPG) the composition is skewed to polar residues. The segment at 152 to 192 (KKYHEKYKERNRLAAGRSRQKQADLINLLQAEQQEEERRRK) is basic motif. Positions 152 to 215 (KKYHEKYKER…VDMKQELQHH (64 aa)) constitute a bZIP domain. A leucine-zipper region spans residues 198 to 212 (IANMQKELVDMKQEL).

The protein localises to the nucleus. In terms of biological role, transcription factor; part of the gene cluster that mediates the biosynthesis of ochratoxin A (OTA), a mycotoxin demonstrated to have nephrotoxic, immunotoxic, genotoxic, neurotoxic, and teratogenic properties. Positively regulates the expression of the OTA biosynthetic genes and subsequent production of OTA. Probably binds to conserved 5'-ACGT-3' bZIP binding motifs found in multiple copies (3 to 4) in the promoters of the OTA biosynthetic genes. Acts not only as a pathway-specific regulator of the OTA cluster but also binds at other chromosomal positions outside the OTA cluster and can act as a broad regulator. Negatively regulates pathogenicity and plays a critical role in tolerance to reactive oxygen species (ROS). This chain is Transcription factor otaR1, found in Aspergillus niger (strain ATCC MYA-4892 / CBS 513.88 / FGSC A1513).